A 238-amino-acid chain; its full sequence is MIILPAIDLKGGKCVRLYKGDMNSQEVVARDPFETALKFKSEGAQYLHMVDLDGALKGSGENLDIISKIVKNVDVPIEVGGGIRNIETIDKFIKLGVSRVILGTAALKNKELVIKAVENYDEKIAVGIDAKDGVPAADGWTTLSKTNYIDFGKEMEKIGVQTLIFTDISKDGTLEGTNLEQLLKLKNSVKCNVIASGGIKDIEDIKSLKKENVYGAIVGKAIYAKTLSLKKAIEIGGN.

Residue aspartate 8 is the Proton acceptor of the active site. Aspartate 129 acts as the Proton donor in catalysis.

It belongs to the HisA/HisF family.

It localises to the cytoplasm. The enzyme catalyses 1-(5-phospho-beta-D-ribosyl)-5-[(5-phospho-beta-D-ribosylamino)methylideneamino]imidazole-4-carboxamide = 5-[(5-phospho-1-deoxy-D-ribulos-1-ylimino)methylamino]-1-(5-phospho-beta-D-ribosyl)imidazole-4-carboxamide. Its pathway is amino-acid biosynthesis; L-histidine biosynthesis; L-histidine from 5-phospho-alpha-D-ribose 1-diphosphate: step 4/9. The polypeptide is 1-(5-phosphoribosyl)-5-[(5-phosphoribosylamino)methylideneamino] imidazole-4-carboxamide isomerase (Clostridium kluyveri (strain NBRC 12016)).